The following is a 519-amino-acid chain: Dideacetyl fusicoccin A C-19 hydroxylase (519 aa).

Residues 16–36 (LPVAPILFTALAATIGAFLLS) form a helical membrane-spanning segment. N-linked (GlcNAc...) asparagine glycosylation is found at Asn177, Asn327, Asn414, and Asn432. Residue Cys454 coordinates heme.

Belongs to the cytochrome P450 family. It depends on heme as a cofactor.

It localises to the membrane. The protein operates within mycotoxin biosynthesis. Functionally, cytochrome P450 monooxygenase; part of the 2 gene clusters that mediate the biosynthesis of fusicoccins, diterpene glucosides that display phytohormone-like activity and function as potent activators of plasma membrane H(+)-ATPases in plants by modifying 14-3-3 proteins and cause the plant disease constriction canker. The first step in the pathway is performed by the fusicoccadiene synthase PaFS that possesses both prenyl transferase and terpene cyclase activity, converting isopentenyl diphosphate and dimethylallyl diphosphate into geranylgeranyl diphosphate (GGDP) and successively converting GGDP into fusicocca-2,10(14)-diene, a precursor for fusicoccin H. The second step is the oxidation at the C-8 position by the cytochrome P450 monooxygenase PaP450-2 to yield fusicocca-2,10(14)-diene-8-beta-ol. The cytochrome P450 monooxygenase PaP450-1 then catalyzes the hydroxylation at the C-16 position to produce fusicocca-2,10(14)-diene-8-beta,16-diol. The dioxygenase fc-dox then catalyzes the 16-oxydation of fusicocca-2,10(14)-diene-8-beta,16-diol to yield an aldehyde (8-beta-hydroxyfusicocca-1,10(14)-dien-16-al). The short-chain dehydrogenase/reductase fc-sdr catalyzes the reduction of the aldehyde to yield fusicocca-1,10(14)-diene-8-beta,16-diol. The next step is the hydroxylation at C-9 performed by the cytochrome P450 monooxygenase PaP450-3 that leads to fusicoccin H aglycon which is glycosylated to fusicoccin H by the O-glycosyltransferase PaGT. Hydroxylation at C-12 by the cytochrome P450 monooxygenase PaP450-4 leads then to the production of fusicoccin Q and is followed by methylation by the O-methyltransferase PaMT to yield fusicoccin P. Fusicoccin P is further converted to fusicoccin J via prenylation by the O-glucose prenyltransferase PaPT. Cytochrome P450 monooxygenase PaP450-5 then performs hydroxylation at C-19 to yield dideacetyl-fusicoccin A which is acetylated to 3'-O-deacetyl-fusicoccin A by the O-acetyltransferase PaAT-2. Finally, a another acetylation by the O-acetyltransferase PaAT-1 yields fusicoccin A. The polypeptide is Dideacetyl fusicoccin A C-19 hydroxylase (Phomopsis amygdali (Fusicoccum amygdali)).